Here is a 400-residue protein sequence, read N- to C-terminus: Formate-dependent phosphoribosylglycinamide formyltransferase (400 aa).

N(1)-(5-phospho-beta-D-ribosyl)glycinamide contacts are provided by residues 22 to 23 (EL) and Glu82. Residues Arg115, Lys156, 161–166 (SSGKGQ), 196–199 (EGFI), and Glu204 each bind ATP. The 190-residue stretch at 120–309 (RLAAETLGLP…EFALHARAIL (190 aa)) folds into the ATP-grasp domain. Mg(2+)-binding residues include Glu268 and Glu280. N(1)-(5-phospho-beta-D-ribosyl)glycinamide is bound by residues Asp287, Lys361, and 368–369 (RR).

The protein belongs to the PurK/PurT family. Homodimer.

It carries out the reaction N(1)-(5-phospho-beta-D-ribosyl)glycinamide + formate + ATP = N(2)-formyl-N(1)-(5-phospho-beta-D-ribosyl)glycinamide + ADP + phosphate + H(+). Its pathway is purine metabolism; IMP biosynthesis via de novo pathway; N(2)-formyl-N(1)-(5-phospho-D-ribosyl)glycinamide from N(1)-(5-phospho-D-ribosyl)glycinamide (formate route): step 1/1. In terms of biological role, involved in the de novo purine biosynthesis. Catalyzes the transfer of formate to 5-phospho-ribosyl-glycinamide (GAR), producing 5-phospho-ribosyl-N-formylglycinamide (FGAR). Formate is provided by PurU via hydrolysis of 10-formyl-tetrahydrofolate. The sequence is that of Formate-dependent phosphoribosylglycinamide formyltransferase from Xanthomonas oryzae pv. oryzae (strain PXO99A).